We begin with the raw amino-acid sequence, 105 residues long: Large ribosomal subunit protein uL24 (105 aa).

Belongs to the universal ribosomal protein uL24 family. Part of the 50S ribosomal subunit.

In terms of biological role, one of two assembly initiator proteins, it binds directly to the 5'-end of the 23S rRNA, where it nucleates assembly of the 50S subunit. Functionally, one of the proteins that surrounds the polypeptide exit tunnel on the outside of the subunit. This Beijerinckia indica subsp. indica (strain ATCC 9039 / DSM 1715 / NCIMB 8712) protein is Large ribosomal subunit protein uL24.